A 417-amino-acid chain; its full sequence is 4-hydroxy-3-methylbut-2-en-1-yl diphosphate synthase (flavodoxin) (417 aa).

Cysteine 305, cysteine 308, cysteine 351, and glutamate 358 together coordinate [4Fe-4S] cluster.

This sequence belongs to the IspG family. Requires [4Fe-4S] cluster as cofactor.

It carries out the reaction (2E)-4-hydroxy-3-methylbut-2-enyl diphosphate + oxidized [flavodoxin] + H2O + 2 H(+) = 2-C-methyl-D-erythritol 2,4-cyclic diphosphate + reduced [flavodoxin]. It participates in isoprenoid biosynthesis; isopentenyl diphosphate biosynthesis via DXP pathway; isopentenyl diphosphate from 1-deoxy-D-xylulose 5-phosphate: step 5/6. Functionally, converts 2C-methyl-D-erythritol 2,4-cyclodiphosphate (ME-2,4cPP) into 1-hydroxy-2-methyl-2-(E)-butenyl 4-diphosphate. This chain is 4-hydroxy-3-methylbut-2-en-1-yl diphosphate synthase (flavodoxin), found in Nitrosomonas europaea (strain ATCC 19718 / CIP 103999 / KCTC 2705 / NBRC 14298).